A 318-amino-acid chain; its full sequence is Ankyrin repeat and SOCS box protein 7 (318 aa).

ANK repeat units follow at residues 13–42 (QEELQIQAAVAAGDVHTVRKMLEQGYSPNG), 46–75 (NGWTLLHFSAARGKERCVRVFLEHGADPTV), 80–109 (GGFTALHYAAMHGRARIARLMLESEYRSDI), 116–145 (DGWTPLHVAAHYGRDSFVRLLLEFKAEVDP), 149–178 (KGTTPLQLAIIRERSSCVKILLDHNANIDI), 180–208 (NGFLLRYAVIKSNHSYCRMFLQRGADTNL), and 213–242 (DGQTPLHLSALRDDVLCARMLYNYGADTNT). The region spanning 265 to 318 (LDFLQDVTRQPRTLQDLCRIKIRQCIGLQNLKLLDELPIAKVMKDYLKHKFDDI) is the SOCS box domain.

Belongs to the ankyrin SOCS box (ASB) family. In terms of assembly, interacts with CUL5. Interacts with RNF7. Interacts with PSRC1.

Its subcellular location is the nucleus. The protein resides in the cytoplasm. It functions in the pathway protein modification; protein ubiquitination. Functionally, probable substrate-recognition component of a SCF-like ECS (Elongin-Cullin-SOCS-box protein) E3 ubiquitin-protein ligase complex which mediates the ubiquitination and subsequent proteasomal degradation of target proteins. Plays a role in spindle dynamics and genome integrity by targeting the mitotic progression protein PSRC1 for proteasomal degradation in a cell cycle-dependent manner. Also participates in meiosis by mediating the proper attachment between kinetochores and microtubules. This Mus musculus (Mouse) protein is Ankyrin repeat and SOCS box protein 7 (Asb7).